The primary structure comprises 168 residues: Cell division inhibitor SulA (168 aa).

Residues 106–112 (ALQTGNY) form a ftsZ binding region. Residues 161 to 168 (KIHSSLYH) are lon protease binding.

The protein belongs to the SulA family. In terms of assembly, interacts with FtsZ. Post-translationally, is rapidly cleaved and degraded by the Lon protease once DNA damage is repaired.

Component of the SOS system and an inhibitor of cell division. Accumulation of SulA causes rapid cessation of cell division and the appearance of long, non-septate filaments. In the presence of GTP, binds a polymerization-competent form of FtsZ in a 1:1 ratio, thus inhibiting FtsZ polymerization and therefore preventing it from participating in the assembly of the Z ring. This mechanism prevents the premature segregation of damaged DNA to daughter cells during cell division. The sequence is that of Cell division inhibitor SulA from Serratia marcescens.